The chain runs to 331 residues: Ketol-acid reductoisomerase (NADP(+)) (331 aa).

One can recognise a KARI N-terminal Rossmann domain in the interval 2–182; the sequence is AKMYYDSDCN…GAGRAGILET (181 aa). NADP(+) is bound by residues 25 to 28, S51, and 83 to 86; these read YGSQ and DEKQ. H108 is a catalytic residue. G134 provides a ligand contact to NADP(+). Residues 183–329 form the KARI C-terminal knotted domain; sequence TFREETETDL…AELRKMMSWL (147 aa). Residues D191, E195, E227, and E231 each coordinate Mg(2+). Substrate is bound at residue S252.

The protein belongs to the ketol-acid reductoisomerase family. Mg(2+) serves as cofactor.

It catalyses the reaction (2R)-2,3-dihydroxy-3-methylbutanoate + NADP(+) = (2S)-2-acetolactate + NADPH + H(+). It carries out the reaction (2R,3R)-2,3-dihydroxy-3-methylpentanoate + NADP(+) = (S)-2-ethyl-2-hydroxy-3-oxobutanoate + NADPH + H(+). It participates in amino-acid biosynthesis; L-isoleucine biosynthesis; L-isoleucine from 2-oxobutanoate: step 2/4. It functions in the pathway amino-acid biosynthesis; L-valine biosynthesis; L-valine from pyruvate: step 2/4. Involved in the biosynthesis of branched-chain amino acids (BCAA). Catalyzes an alkyl-migration followed by a ketol-acid reduction of (S)-2-acetolactate (S2AL) to yield (R)-2,3-dihydroxy-isovalerate. In the isomerase reaction, S2AL is rearranged via a Mg-dependent methyl migration to produce 3-hydroxy-3-methyl-2-ketobutyrate (HMKB). In the reductase reaction, this 2-ketoacid undergoes a metal-dependent reduction by NADPH to yield (R)-2,3-dihydroxy-isovalerate. The protein is Ketol-acid reductoisomerase (NADP(+)) of Ruminiclostridium cellulolyticum (strain ATCC 35319 / DSM 5812 / JCM 6584 / H10) (Clostridium cellulolyticum).